The sequence spans 290 residues: Sodium/potassium-transporting ATPase subunit beta-2 (290 aa).

At 1-39 (MVIQKEKKSCGQVVEEWKEFVWNPRTHQFMGRTGTSWAF) the chain is on the cytoplasmic side. The helical; Signal-anchor for type II membrane protein transmembrane segment at 40–67 (ILLFYLVFYGFLTAMFTLTMWVMLQTVS) threads the bilayer. At 68–290 (EHTPKYQDRL…VAFKLRINKT (223 aa)) the chain is on the extracellular side. 2 N-linked (GlcNAc...) asparagine glycosylation sites follow: Asn-96 and Asn-118. Cys-129 and Cys-150 are disulfide-bonded. Asn-153 and Asn-159 each carry an N-linked (GlcNAc...) asparagine glycan. Cys-160 and Cys-177 are disulfide-bonded. Asn-193, Asn-197, and Asn-238 each carry an N-linked (GlcNAc...) asparagine glycan. An immunoglobulin-like region spans residues 193 to 290 (NQSMNVTCAG…VAFKLRINKT (98 aa)). Cys-200 and Cys-261 are joined by a disulfide.

This sequence belongs to the X(+)/potassium ATPases subunit beta family. In terms of assembly, the sodium/potassium-transporting ATPase is composed of a catalytic alpha subunit, an auxiliary non-catalytic beta subunit and an additional regulatory subunit. Interacts with BSG.

The protein resides in the cell membrane. This is the non-catalytic component of the active enzyme, which catalyzes the hydrolysis of ATP coupled with the exchange of Na(+) and K(+) ions across the plasma membrane. The exact function of the beta-2 subunit is not known. Functionally, mediates cell adhesion of neurons and astrocytes, and promotes neurite outgrowth. The chain is Sodium/potassium-transporting ATPase subunit beta-2 (ATP1B2) from Oryctolagus cuniculus (Rabbit).